The chain runs to 140 residues: C-type lectin 6 (140 aa).

Residues 1–23 form the signal peptide; the sequence is MGRLVFVSFGLLVVFLSLSGTGA. 3 disulfides stabilise this stretch: cysteine 25/cysteine 36, cysteine 53/cysteine 138, and cysteine 115/cysteine 130. Residues 32–139 form the C-type lectin domain; that stretch reads YEGHCYRVFQ…CSKTHNVICK (108 aa).

This sequence belongs to the snaclec family. Heteromultimer; disulfide-linked. In terms of tissue distribution, expressed by the venom gland.

It localises to the secreted. Its function is as follows. Interferes with one step of hemostasis (modulation of platelet aggregation, or coagulation cascade, for example). This chain is C-type lectin 6, found in Crotalus adamanteus (Eastern diamondback rattlesnake).